The following is a 448-amino-acid chain: RuvB-like 2 (448 aa).

73 to 80 contributes to the ATP binding site; the sequence is GEPGAGKT.

Belongs to the RuvB family. Forms homohexameric rings. May form a dodecamer with ruvb-1 made of two stacked hexameric rings. Expressed in gonadal cells.

It localises to the cytoplasm. Its subcellular location is the nucleus. It carries out the reaction ATP + H2O = ADP + phosphate + H(+). Possesses single-stranded DNA-stimulated ATPase and ATP-dependent DNA helicase (5' to 3') activity suggesting a role in nuclear processes such as recombination and transcription. May participate in several chromatin remodeling complexes that mediate the ATP-dependent exchange of histones and remodel chromatin by shifting nucleosomes. Involvement in these complexes is likely required for transcriptional activation of selected genes and DNA repair in response to DNA damage. Has a role in gonadal development. Involved in the endoplasmic reticulum (ER)-associated degradation (ERAD) pathway where it negatively regulates expression of ER stress response genes. Specifically, negatively controls the expression of ER homeostasis regulator ckb-2 in a cdc-48.1/2-dependent manner. This is RuvB-like 2 from Caenorhabditis elegans.